The primary structure comprises 217 residues: Variable small protein 22 (217 aa).

The signal sequence occupies residues 1–18 (MRKRISAIIMTLFMVFMS). Cysteine 19 carries the N-palmitoyl cysteine lipid modification. A lipid anchor (S-diacylglycerol cysteine) is attached at cysteine 19. The interval 151-174 (LGKNDASDDDTKKAIKKDNSDKTK) is disordered. The segment covering 155 to 174 (DASDDDTKKAIKKDNSDKTK) has biased composition (basic and acidic residues).

It belongs to the variable small protein (Vsp) family.

It localises to the cell outer membrane. Its function is as follows. The Vlp and Vsp proteins are antigenically distinct proteins, only one vlp or vsp gene is transcriptionally active at any one time. Switching between these genes is a mechanism of host immune response evasion. The polypeptide is Variable small protein 22 (Borrelia hermsii).